Consider the following 217-residue polypeptide: ATP-dependent Clp protease proteolytic subunit 2 (217 aa).

Ser121 acts as the Nucleophile in catalysis. The active site involves His146.

This sequence belongs to the peptidase S14 family. In terms of assembly, fourteen ClpP subunits assemble into 2 heptameric rings which stack back to back to give a disk-like structure with a central cavity, resembling the structure of eukaryotic proteasomes.

The protein localises to the cytoplasm. The enzyme catalyses Hydrolysis of proteins to small peptides in the presence of ATP and magnesium. alpha-casein is the usual test substrate. In the absence of ATP, only oligopeptides shorter than five residues are hydrolyzed (such as succinyl-Leu-Tyr-|-NHMec, and Leu-Tyr-Leu-|-Tyr-Trp, in which cleavage of the -Tyr-|-Leu- and -Tyr-|-Trp bonds also occurs).. Cleaves peptides in various proteins in a process that requires ATP hydrolysis. Has a chymotrypsin-like activity. Plays a major role in the degradation of misfolded proteins. The sequence is that of ATP-dependent Clp protease proteolytic subunit 2 from Paraburkholderia xenovorans (strain LB400).